Reading from the N-terminus, the 640-residue chain is Threonine--tRNA ligase (640 aa).

In terms of domain architecture, TGS spans M1–T61. The interval D242–P533 is catalytic. Zn(2+) contacts are provided by C333, H384, and H510.

The protein belongs to the class-II aminoacyl-tRNA synthetase family. In terms of assembly, homodimer. Zn(2+) serves as cofactor.

It is found in the cytoplasm. It carries out the reaction tRNA(Thr) + L-threonine + ATP = L-threonyl-tRNA(Thr) + AMP + diphosphate + H(+). In terms of biological role, catalyzes the attachment of threonine to tRNA(Thr) in a two-step reaction: L-threonine is first activated by ATP to form Thr-AMP and then transferred to the acceptor end of tRNA(Thr). Also edits incorrectly charged L-seryl-tRNA(Thr). This Prochlorococcus marinus (strain NATL1A) protein is Threonine--tRNA ligase.